Reading from the N-terminus, the 549-residue chain is Beta-hexosaminidase Amuc_0868 (549 aa).

A signal peptide spans 1–28 (MISKCTFSATVFSLFSLCWGAPSSPVLE). Arginine 161 provides a ligand contact to substrate. Catalysis depends on charge relay system residues aspartate 190 and histidine 260. Position 326 (aspartate 326) interacts with substrate. Glutamate 327 functions as the Charge relay system in the catalytic mechanism. Substrate-binding positions include tryptophan 393, 420-422 (YFD), and 474-476 (WTE). Residues 526 to 549 (GVNYKRPDNGAPAQPKAVITRERR) form a disordered region.

This sequence belongs to the glycosyl hydrolase 20 family.

It catalyses the reaction Hydrolysis of terminal non-reducing N-acetyl-D-hexosamine residues in N-acetyl-beta-D-hexosaminides.. Its activity is regulated as follows. Inhibited strongly by Cu(2+), Zn(2+), Cd(2+) and Ni(2+) ions. No effect on activity with Na(+), Li(+), K(+), Ca(2+), Mg(2+) or Mn(2+) ions. Its function is as follows. Potentially capable of cleaving the specific glycoside linkages in the process of mucin degradation in human intestinal tract. Hydrolyzes chromogenic substrates pNP-beta-GlcNAc with high activity and pNP-beta-GalNAc to a lesser extent, but not pNP-beta-glucose or pNP-beta-galactose. The sequence is that of Beta-hexosaminidase Amuc_0868 from Akkermansia muciniphila (strain ATCC BAA-835 / DSM 22959 / JCM 33894 / BCRC 81048 / CCUG 64013 / CIP 107961 / Muc).